The following is a 101-amino-acid chain: Ubiquitin-related modifier 1 homolog 1 (101 aa).

Position 101 is a 1-thioglycine (Gly-101). A Glycyl lysine isopeptide (Gly-Lys) (interchain with K-? in acceptor proteins) cross-link involves residue Gly-101.

This sequence belongs to the URM1 family. In terms of processing, C-terminal thiocarboxylation occurs in 2 steps, it is first acyl-adenylated (-COAMP) via the hesA/moeB/thiF part of the MOCS3 homolog, then thiocarboxylated (-COSH) via the rhodanese domain of the MOCS3 homolog.

The protein localises to the cytoplasm. Its pathway is tRNA modification; 5-methoxycarbonylmethyl-2-thiouridine-tRNA biosynthesis. Acts as a sulfur carrier required for 2-thiolation of mcm(5)S(2)U at tRNA wobble positions of cytosolic tRNA(Lys), tRNA(Glu) and tRNA(Gln). Serves as sulfur donor in tRNA 2-thiolation reaction by being thiocarboxylated (-COSH) at its C-terminus by MOCS3. The sulfur is then transferred to tRNA to form 2-thiolation of mcm(5)S(2)U. Also acts as a ubiquitin-like protein (UBL) that is covalently conjugated via an isopeptide bond to lysine residues of target proteins. The thiocarboxylated form serves as substrate for conjugation and oxidative stress specifically induces the formation of UBL-protein conjugates. This Arabidopsis thaliana (Mouse-ear cress) protein is Ubiquitin-related modifier 1 homolog 1.